The following is a 226-amino-acid chain: tRNA (guanine-N(1)-)-methyltransferase (226 aa).

S-adenosyl-L-methionine contacts are provided by residues G110 and 130-135 (IGDFIL).

Belongs to the RNA methyltransferase TrmD family. As to quaternary structure, homodimer.

The protein localises to the cytoplasm. The enzyme catalyses guanosine(37) in tRNA + S-adenosyl-L-methionine = N(1)-methylguanosine(37) in tRNA + S-adenosyl-L-homocysteine + H(+). Functionally, specifically methylates guanosine-37 in various tRNAs. This is tRNA (guanine-N(1)-)-methyltransferase from Nitratiruptor sp. (strain SB155-2).